Reading from the N-terminus, the 181-residue chain is Small ribosomal subunit protein uS4 (181 aa).

Positions 108-177 constitute an S4 RNA-binding domain; the sequence is RRLQTMVYRQ…EGHPEIERIN (70 aa). Positions 161–181 are disordered; that stretch reads GTSPLTSEGHPEIERINKKRR. Over residues 169 to 181 the composition is skewed to basic and acidic residues; sequence GHPEIERINKKRR.

This sequence belongs to the universal ribosomal protein uS4 family. Part of the 30S ribosomal subunit. Contacts protein S5. The interaction surface between S4 and S5 is involved in control of translational fidelity.

Its function is as follows. One of the primary rRNA binding proteins, it binds directly to 16S rRNA where it nucleates assembly of the body of the 30S subunit. With S5 and S12 plays an important role in translational accuracy. The protein is Small ribosomal subunit protein uS4 of Methanosphaerula palustris (strain ATCC BAA-1556 / DSM 19958 / E1-9c).